The following is a 248-amino-acid chain: 1-(5-phosphoribosyl)-5-[(5-phosphoribosylamino)methylideneamino] imidazole-4-carboxamide isomerase (248 aa).

Catalysis depends on Asp-8, which acts as the Proton acceptor. Asp-131 functions as the Proton donor in the catalytic mechanism.

It belongs to the HisA/HisF family.

Its subcellular location is the cytoplasm. It catalyses the reaction 1-(5-phospho-beta-D-ribosyl)-5-[(5-phospho-beta-D-ribosylamino)methylideneamino]imidazole-4-carboxamide = 5-[(5-phospho-1-deoxy-D-ribulos-1-ylimino)methylamino]-1-(5-phospho-beta-D-ribosyl)imidazole-4-carboxamide. The protein operates within amino-acid biosynthesis; L-histidine biosynthesis; L-histidine from 5-phospho-alpha-D-ribose 1-diphosphate: step 4/9. This is 1-(5-phosphoribosyl)-5-[(5-phosphoribosylamino)methylideneamino] imidazole-4-carboxamide isomerase from Nitrosomonas eutropha (strain DSM 101675 / C91 / Nm57).